The chain runs to 440 residues: Protein EFFECTOR OF TRANSCRIPTION (440 aa).

A GIY-YIG domain is found at serine 131–proline 167. Residues leucine 172–histidine 216 form a disordered region. A compositionally biased stretch (polar residues) spans asparagine 175 to lysine 184. The span at histidine 194–alanine 207 shows a compositional bias: basic and acidic residues. 2 Cx9Cx9RCx2HK repeats span residues cysteine 247 to lysine 272 and cysteine 295 to lysine 320. Positions isoleucine 339–leucine 363 are disordered. Cx9Cx9RCx2HK repeat units lie at residues cysteine 365–lysine 390 and cysteine 409–lysine 434.

The protein localises to the nucleus. Its function is as follows. Transcription regulator that negatively modulates gibberellin-mediated developmental processes. May act as transcriptional repressor of giberellin controlled genes. Binds DNA without sequence preference. This chain is Protein EFFECTOR OF TRANSCRIPTION, found in Brassica napus (Rape).